The following is a 259-amino-acid chain: Acyl-[acyl-carrier-protein]--UDP-N-acetylglucosamine O-acyltransferase (259 aa).

This sequence belongs to the transferase hexapeptide repeat family. LpxA subfamily. Homotrimer.

It localises to the cytoplasm. It carries out the reaction a (3R)-hydroxyacyl-[ACP] + UDP-N-acetyl-alpha-D-glucosamine = a UDP-3-O-[(3R)-3-hydroxyacyl]-N-acetyl-alpha-D-glucosamine + holo-[ACP]. The protein operates within glycolipid biosynthesis; lipid IV(A) biosynthesis; lipid IV(A) from (3R)-3-hydroxytetradecanoyl-[acyl-carrier-protein] and UDP-N-acetyl-alpha-D-glucosamine: step 1/6. Its function is as follows. Involved in the biosynthesis of lipid A, a phosphorylated glycolipid that anchors the lipopolysaccharide to the outer membrane of the cell. This is Acyl-[acyl-carrier-protein]--UDP-N-acetylglucosamine O-acyltransferase from Psychrobacter cryohalolentis (strain ATCC BAA-1226 / DSM 17306 / VKM B-2378 / K5).